Here is a 482-residue protein sequence, read N- to C-terminus: MEGSDGSPRMSTEQENTEMHLIECMLKHFKTQKVAISNAIRSTFPFLESLRDHEFITGKMYEDLLDSCRSLVPVDKVIYRALEELEKKFDMTVLCELFNEVNMEKYPDLNLIRRSFGCVFPNELCFQGIDGGNPNSQLSLEQGPGASYSQGSPNGSSLDLSASEGWRSNDRRNSNLMQANQTENHQLAESPGHLDSCELQVQLNNRDATPESCSLLPQNEERAVQLNYELQINPCFVQLVDVKKENSSFSLAGNQQTRARTNQNEDSEIIELSSGDSDNGENFSEATTTVPSQPAPAYSRKPPTLRRDRGGDTSDTESSIIIRRRKRTGRKKRERLGSYLIRNIKIPMKPSWKTAFLARSANPSSQRRRKRGPRIPREENADFGGAELPVVCGNAQGFLDKEKFKQGIYVRSIRGKTGRLFTPMDFEIEGNCEKAKNWRQSIRCKGWTLRELIQKGVLQDPPRKKKETPRNPRQTRRQVNAL.

The HSR domain occupies 6 to 121 (GSPRMSTEQE…IRRSFGCVFP (116 aa)). The interval 136–170 (SQLSLEQGPGASYSQGSPNGSSLDLSASEGWRSND) is disordered. Polar residues predominate over residues 147–160 (SYSQGSPNGSSLDL). Phosphoserine is present on residues S174 and S190. T209 carries the phosphothreonine modification. The PxVxL motif signature appears at 230 to 243 (LQINPCFVQLVDVK). A Glycyl lysine isopeptide (Lys-Gly) (interchain with G-Cter in SUMO) cross-link involves residue K243. Composition is skewed to polar residues over residues 250-264 (SLAGNQQTRARTNQN) and 274-292 (SGDSDNGENFSEATTTVPS). Disordered regions lie at residues 250–334 (SLAG…KKRE), 357–381 (LARSANPSSQRRRKRGPRIPREENA), and 455–482 (KGVLQDPPRKKKETPRNPRQTRRQVNAL). T313 is modified (phosphothreonine). Position 314 is a phosphoserine (S314). Position 316 is a phosphothreonine (T316). Residues S318 and S319 each carry the phosphoserine modification. The segment covering 322-334 (IRRRKRTGRKKRE) has biased composition (basic residues). One can recognise an SAND domain in the interval 378–459 (EENADFGGAE…RELIQKGVLQ (82 aa)).

In terms of assembly, homodimer. Interacts with members of the HP1 family of nonhistone chromosomal protein, such as CBX5 and CBX3 via the PxVxL motif. Interacts with ETS1; the interaction is direct and modulates ETS1 transcriptional activity. Interacts with the MRN complex which is composed of two heterodimers RAD50/MRE11 associated with a single NBN; recruits the complex to PML-related bodies. Interacts with HIPK2; positively regulates TP53-dependent transcription. Interacts with CASP8AP2; may negatively regulate CASP8AP2 export from the nucleus to the cytoplasm. Sumoylated. Sumoylated with SUMO1. Sumoylation depends on a functional nuclear localization signal but is not necessary for nuclear import or nuclear body targeting. Sumoylation may stabilize the interaction with CBX5.

It localises to the nucleus. The protein resides in the PML body. It is found in the nuclear body. Its subcellular location is the cytoplasm. Functionally, together with PML, this tumor suppressor is a major constituent of the PML bodies, a subnuclear organelle involved in a large number of physiological processes including cell growth, differentiation and apoptosis. Functions as a transcriptional coactivator of ETS1 and ETS2. Under certain conditions, it may also act as a corepressor of ETS1 preventing its binding to DNA. Through the regulation of ETS1 it may play a role in angiogenesis, controlling endothelial cell motility and invasion. Through interaction with the MRN complex it may be involved in the regulation of telomeres lengthening. May also regulate TP53-mediated transcription and through CASP8AP2, regulate FAS-mediated apoptosis. May also play a role in infection by viruses through mechanisms that may involve chromatin and/or transcriptional regulation. In Mus musculus (Mouse), this protein is Nuclear autoantigen Sp-100 (Sp100).